We begin with the raw amino-acid sequence, 117 residues long: Large ribosomal subunit protein uL22 (117 aa).

This sequence belongs to the universal ribosomal protein uL22 family. Part of the 50S ribosomal subunit.

In terms of biological role, this protein binds specifically to 23S rRNA; its binding is stimulated by other ribosomal proteins, e.g. L4, L17, and L20. It is important during the early stages of 50S assembly. It makes multiple contacts with different domains of the 23S rRNA in the assembled 50S subunit and ribosome. Its function is as follows. The globular domain of the protein is located near the polypeptide exit tunnel on the outside of the subunit, while an extended beta-hairpin is found that lines the wall of the exit tunnel in the center of the 70S ribosome. The sequence is that of Large ribosomal subunit protein uL22 from Lactobacillus helveticus (strain DPC 4571).